The sequence spans 599 residues: Elongation factor 4 (599 aa).

Residues 4–185 (KNIRNFSIIA…VIIKKVPSPK (182 aa)) enclose the tr-type G domain. Residues 16-21 (DHGKST) and 132-135 (NKVD) each bind GTP.

The protein belongs to the TRAFAC class translation factor GTPase superfamily. Classic translation factor GTPase family. LepA subfamily.

Its subcellular location is the cell membrane. The catalysed reaction is GTP + H2O = GDP + phosphate + H(+). Its function is as follows. Required for accurate and efficient protein synthesis under certain stress conditions. May act as a fidelity factor of the translation reaction, by catalyzing a one-codon backward translocation of tRNAs on improperly translocated ribosomes. Back-translocation proceeds from a post-translocation (POST) complex to a pre-translocation (PRE) complex, thus giving elongation factor G a second chance to translocate the tRNAs correctly. Binds to ribosomes in a GTP-dependent manner. This chain is Elongation factor 4, found in Mycoplasmoides gallisepticum (strain R(low / passage 15 / clone 2)) (Mycoplasma gallisepticum).